A 229-amino-acid polypeptide reads, in one-letter code: PKHD-type hydroxylase BBta_3541 (229 aa).

Residues 78–180 (QIFPPLFNRY…RVASFFWMQS (103 aa)) form the Fe2OG dioxygenase domain. Residues H98, D100, and H161 each contribute to the Fe cation site. A 2-oxoglutarate-binding site is contributed by R171.

Requires Fe(2+) as cofactor. It depends on L-ascorbate as a cofactor.

In Bradyrhizobium sp. (strain BTAi1 / ATCC BAA-1182), this protein is PKHD-type hydroxylase BBta_3541.